A 241-amino-acid polypeptide reads, in one-letter code: 3-oxoacyl-[acyl-carrier-protein] reductase FabG (241 aa).

Residues 13 to 16 (GASG), Ser38, 57 to 58 (EV), and Asn83 each bind NADP(+). Residue Ser135 coordinates substrate. Residue Tyr148 is the Proton acceptor of the active site. Residues 148 to 152 (YCASK) and Ile181 contribute to the NADP(+) site.

It belongs to the short-chain dehydrogenases/reductases (SDR) family. As to quaternary structure, homotetramer.

The catalysed reaction is a (3R)-hydroxyacyl-[ACP] + NADP(+) = a 3-oxoacyl-[ACP] + NADPH + H(+). The protein operates within lipid metabolism; fatty acid biosynthesis. Catalyzes the NADPH-dependent reduction of beta-ketoacyl-ACP substrates to beta-hydroxyacyl-ACP products, the first reductive step in the elongation cycle of fatty acid biosynthesis. The chain is 3-oxoacyl-[acyl-carrier-protein] reductase FabG (fabG) from Rickettsia conorii (strain ATCC VR-613 / Malish 7).